A 302-amino-acid chain; its full sequence is Sulfate adenylyltransferase subunit 2 (302 aa).

Belongs to the PAPS reductase family. CysD subfamily. Heterodimer composed of CysD, the smaller subunit, and CysN.

The catalysed reaction is sulfate + ATP + H(+) = adenosine 5'-phosphosulfate + diphosphate. It participates in sulfur metabolism; hydrogen sulfide biosynthesis; sulfite from sulfate: step 1/3. Its function is as follows. With CysN forms the ATP sulfurylase (ATPS) that catalyzes the adenylation of sulfate producing adenosine 5'-phosphosulfate (APS) and diphosphate, the first enzymatic step in sulfur assimilation pathway. APS synthesis involves the formation of a high-energy phosphoric-sulfuric acid anhydride bond driven by GTP hydrolysis by CysN coupled to ATP hydrolysis by CysD. In Serratia proteamaculans (strain 568), this protein is Sulfate adenylyltransferase subunit 2.